The following is a 441-amino-acid chain: uncharacterized protein (441 aa).

11 helical membrane-spanning segments follow: residues 62 to 82 (FLSL…FEIG), 88 to 108 (LILT…KLFG), 112 to 132 (IALT…IIAL), 154 to 174 (ALLH…LLVV), 192 to 212 (WMFF…YLLY), 224 to 244 (ALMI…GVAS), 247 to 267 (ANLS…YMVC), 312 to 332 (IVLF…ATFA), 335 to 355 (ISVM…IIFL), 363 to 383 (QGMW…NLLL), and 399 to 419 (ILCS…LLYA).

The protein localises to the membrane. This is an uncharacterized protein from Schizosaccharomyces pombe (strain 972 / ATCC 24843) (Fission yeast).